Consider the following 364-residue polypeptide: Fructose-bisphosphate aldolase C (364 aa).

Position 5 is a phosphotyrosine (Tyr-5). A phosphoserine mark is found at Ser-36, Ser-39, and Ser-45. Arg-56 provides a ligand contact to substrate. Lys-111 is modified (N6-acetyllysine). A Phosphoserine modification is found at Ser-132. Lys-147 lines the substrate pocket. The active-site Proton acceptor is the Glu-188. Lys-230 acts as the Schiff-base intermediate with dihydroxyacetone-P in catalysis.

It belongs to the class I fructose-bisphosphate aldolase family. In terms of assembly, homotetramer. Interacts with ATP6V1E1. May interact with PLD2.

It catalyses the reaction beta-D-fructose 1,6-bisphosphate = D-glyceraldehyde 3-phosphate + dihydroxyacetone phosphate. It participates in carbohydrate degradation; glycolysis; D-glyceraldehyde 3-phosphate and glycerone phosphate from D-glucose: step 4/4. This chain is Fructose-bisphosphate aldolase C (ALDOC), found in Homo sapiens (Human).